We begin with the raw amino-acid sequence, 189 residues long: RxLR effector protein CRE18 (189 aa).

Positions 1–23 (MSKLFYAFAVLAVHVLTSSPTTA) are cleaved as a signal peptide. Residues 47 to 68 (RFLRSIHEGEDSLKPSAFSEER) carry the RxLR-dEER motif.

It belongs to the RxLR effector family.

It is found in the secreted. The protein localises to the host cytoplasm. The protein resides in the host nucleus. Effector that is involved in host plant infection. Contributes to virulence during the early infection stage, by inhibiting plant defense responses induced by both PAMP-triggered immunity (PTI) and effector-triggered immunity (ETI). This Phytophthora infestans (strain T30-4) (Potato late blight agent) protein is RxLR effector protein CRE18.